Reading from the N-terminus, the 463-residue chain is Autophagy-related protein 36 (463 aa).

The segment at 5–45 (CSICLEVLVDKEAFTEPCLHYYHNECIKEWTKRANTCPKCR) adopts an RING-type; atypical zinc-finger fold. A PHD-type zinc finger spans residues 85–131 (TNLCALCEDPSTSLIYCESCGGSFHFNCIGIGDELDSEWCCPLCGMF). Over residues 229-242 (TQNSQSSEFSTENN) the composition is skewed to polar residues. Positions 229–281 (TQNSQSSEFSTENNVVPLKNTHELGRKLKKPRRASGIKKNVVERSSSHQSTQI) are disordered. The segment covering 255-264 (KLKKPRRASG) has biased composition (basic residues).

As to quaternary structure, interacts with ATG28.

Functionally, micropexophagy-specific protein required for efficient micropexophagic apparatus (MIPA) formation but not for general autophagy. The sequence is that of Autophagy-related protein 36 (ATG35) from Komagataella phaffii (strain GS115 / ATCC 20864) (Yeast).